The chain runs to 93 residues: Pyrimidine/purine nucleoside phosphorylase (93 aa).

The protein belongs to the nucleoside phosphorylase PpnP family.

It carries out the reaction a purine D-ribonucleoside + phosphate = a purine nucleobase + alpha-D-ribose 1-phosphate. The catalysed reaction is adenosine + phosphate = alpha-D-ribose 1-phosphate + adenine. It catalyses the reaction cytidine + phosphate = cytosine + alpha-D-ribose 1-phosphate. The enzyme catalyses guanosine + phosphate = alpha-D-ribose 1-phosphate + guanine. It carries out the reaction inosine + phosphate = alpha-D-ribose 1-phosphate + hypoxanthine. The catalysed reaction is thymidine + phosphate = 2-deoxy-alpha-D-ribose 1-phosphate + thymine. It catalyses the reaction uridine + phosphate = alpha-D-ribose 1-phosphate + uracil. The enzyme catalyses xanthosine + phosphate = alpha-D-ribose 1-phosphate + xanthine. Functionally, catalyzes the phosphorolysis of diverse nucleosides, yielding D-ribose 1-phosphate and the respective free bases. Can use uridine, adenosine, guanosine, cytidine, thymidine, inosine and xanthosine as substrates. Also catalyzes the reverse reactions. The sequence is that of Pyrimidine/purine nucleoside phosphorylase from Pseudomonas syringae pv. tomato (strain ATCC BAA-871 / DC3000).